A 452-amino-acid chain; its full sequence is Pup--protein ligase (452 aa).

Residue Glu9 participates in Mg(2+) binding. Arg53 contributes to the ATP binding site. Tyr55 lines the Mg(2+) pocket. The active-site Proton acceptor is the Asp57. Glu63 lines the Mg(2+) pocket. The ATP site is built by Thr66 and Trp419.

The protein belongs to the Pup ligase/Pup deamidase family. Pup-conjugating enzyme subfamily.

The catalysed reaction is ATP + [prokaryotic ubiquitin-like protein]-L-glutamate + [protein]-L-lysine = ADP + phosphate + N(6)-([prokaryotic ubiquitin-like protein]-gamma-L-glutamyl)-[protein]-L-lysine.. It participates in protein degradation; proteasomal Pup-dependent pathway. It functions in the pathway protein modification; protein pupylation. Functionally, catalyzes the covalent attachment of the prokaryotic ubiquitin-like protein modifier Pup to the proteasomal substrate proteins, thereby targeting them for proteasomal degradation. This tagging system is termed pupylation. The ligation reaction involves the side-chain carboxylate of the C-terminal glutamate of Pup and the side-chain amino group of a substrate lysine. The protein is Pup--protein ligase of Nocardia farcinica (strain IFM 10152).